Reading from the N-terminus, the 360-residue chain is Phospho-N-acetylmuramoyl-pentapeptide-transferase (360 aa).

Helical transmembrane passes span 24–44, 69–89, 92–112, 133–153, 158–178, 199–219, 239–259, 263–283, 288–308, and 337–357; these read RAVM…PWTI, GTPT…TLLW, WANP…ALGF, MVWQ…LAAN, ILIV…GFLV, GLAT…AYVS, VAIF…FNAY, VFMG…VAVI, FVLV…MLQV, and QVVV…LSTL.

This sequence belongs to the glycosyltransferase 4 family. MraY subfamily. It depends on Mg(2+) as a cofactor.

Its subcellular location is the cell inner membrane. The catalysed reaction is UDP-N-acetyl-alpha-D-muramoyl-L-alanyl-gamma-D-glutamyl-meso-2,6-diaminopimeloyl-D-alanyl-D-alanine + di-trans,octa-cis-undecaprenyl phosphate = di-trans,octa-cis-undecaprenyl diphospho-N-acetyl-alpha-D-muramoyl-L-alanyl-D-glutamyl-meso-2,6-diaminopimeloyl-D-alanyl-D-alanine + UMP. The protein operates within cell wall biogenesis; peptidoglycan biosynthesis. Functionally, catalyzes the initial step of the lipid cycle reactions in the biosynthesis of the cell wall peptidoglycan: transfers peptidoglycan precursor phospho-MurNAc-pentapeptide from UDP-MurNAc-pentapeptide onto the lipid carrier undecaprenyl phosphate, yielding undecaprenyl-pyrophosphoryl-MurNAc-pentapeptide, known as lipid I. This Neisseria meningitidis serogroup C (strain 053442) protein is Phospho-N-acetylmuramoyl-pentapeptide-transferase.